A 318-amino-acid chain; its full sequence is Ribonuclease Z (318 aa).

Positions 62, 64, 66, 67, 140, 211, and 269 each coordinate Zn(2+). Asp66 acts as the Proton acceptor in catalysis.

The protein belongs to the RNase Z family. Homodimer. Zn(2+) is required as a cofactor.

The catalysed reaction is Endonucleolytic cleavage of RNA, removing extra 3' nucleotides from tRNA precursor, generating 3' termini of tRNAs. A 3'-hydroxy group is left at the tRNA terminus and a 5'-phosphoryl group is left at the trailer molecule.. Zinc phosphodiesterase, which displays some tRNA 3'-processing endonuclease activity. Probably involved in tRNA maturation, by removing a 3'-trailer from precursor tRNA. The polypeptide is Ribonuclease Z (Brevibacillus brevis (strain 47 / JCM 6285 / NBRC 100599)).